Here is a 372-residue protein sequence, read N- to C-terminus: L-selectin (372 aa).

Residues 1–28 (MIFPRKCQSTQRDLWNIFKLWGWTMLCC) form the signal peptide. Residues 29-38 (DFLAHHGTDC) constitute a propeptide that is removed on maturation. The Extracellular segment spans residues 39–332 (WTYHYSENPM…FSMIKEGDYN (294 aa)). The region spanning 55 to 155 (RFCRENYTDL…ACHKPKAALC (101 aa)) is the C-type lectin domain. Intrachain disulfides connect Cys-57–Cys-155, Cys-128–Cys-147, Cys-128–Cys-160, Cys-160–Cys-171, Cys-165–Cys-180, Cys-182–Cys-191, Cys-197–Cys-241, Cys-227–Cys-254, Cys-259–Cys-303, and Cys-289–Cys-316. N-linked (GlcNAc...) asparagine glycosylation is found at Asn-60 and Asn-104. Ca(2+) is bound by residues Glu-118, Asn-120, Glu-126, Asn-143, and Asp-144. An EGF-like domain is found at 156–192 (YTASCQPWSCSGHGECVEIINNYTCNCDVGYYGPQCQ). Asn-177 is a glycosylation site (N-linked (GlcNAc...) asparagine). 2 consecutive Sushi domains span residues 195-256 (IQCE…TCQV) and 257-318 (IQCE…ICQK). N-linked (GlcNAc...) asparagine glycosylation is found at Asn-226, Asn-232, Asn-246, and Asn-271. Residues 333 to 355 (PLFIPVAVIVTAFSGLAFIIWLA) traverse the membrane as a helical segment. Residues 356–372 (RRLKKGKKSKKSMDDPY) are Cytoplasmic-facing.

This sequence belongs to the selectin/LECAM family. In terms of assembly, interaction with SELPLG/PSGL1 and PODXL2 is required for promoting recruitment and rolling of leukocytes. This interaction is dependent on the sialyl Lewis X glycan modification of SELPLG and PODXL2, and tyrosine sulfation modifications of SELPLG. Sulfation on 'Tyr-51' of SELPLG is important for L-selectin binding. In terms of processing, N-glycosylated.

Its subcellular location is the cell membrane. Its function is as follows. Calcium-dependent lectin that mediates cell adhesion by binding to glycoproteins on neighboring cells. Mediates the adherence of lymphocytes to endothelial cells of high endothelial venules in peripheral lymph nodes. Promotes initial tethering and rolling of leukocytes in endothelia. The polypeptide is L-selectin (SELL) (Papio hamadryas (Hamadryas baboon)).